The following is a 1020-amino-acid chain: 26S proteasome non-ATPase regulatory subunit 1 (1020 aa).

A disordered region spans residues 279–322 (TALPSTFKPQGTTSEDGAKSEGDKSKSDEDITEETPADDKVERT). Polar residues predominate over residues 281–293 (LPSTFKPQGTTSE). Phosphothreonine is present on T291. Positions 294–307 (DGAKSEGDKSKSDE) are enriched in basic and acidic residues. A phosphoserine mark is found at S298, S303, and S305. Residue T310 is modified to Phosphothreonine. PC repeat units follow at residues 418-452 (TATA…SSGY), 456-489 (GALY…ENVR), 491-525 (GGCL…VTGE), 526-560 (AAGI…EKIL), 562-595 (GLAV…VLRR), 596-631 (SGMY…DVRR), 632-664 (AAVT…PHVR), 666-701 (GAAM…FVRQ), 702-742 (GALI…DVMA), and 745-777 (GAIL…QAVV). Disordered stretches follow at residues 855-950 (QKRR…NPAR) and 999-1020 (FGPM…YIED). 2 stretches are compositionally biased toward basic and acidic residues: residues 858-867 (RENADKKEDE) and 876-939 (KEGA…KEPE). Residues 1003-1020 (NDEEKEPEPPEPFEYIED) show a composition bias toward acidic residues.

Belongs to the proteasome subunit S1 family.

In terms of biological role, acts as a regulatory subunit of the 26S proteasome which is involved in the ATP-dependent degradation of ubiquitinated proteins. The polypeptide is 26S proteasome non-ATPase regulatory subunit 1 (Rpn2) (Drosophila melanogaster (Fruit fly)).